The chain runs to 718 residues: Methionine--tRNA ligase (718 aa).

The 'HIGH' region motif lies at 12-22; the sequence is PYANGDIHLGH. Zn(2+) is bound by residues cysteine 143, cysteine 146, cysteine 156, and cysteine 159. The short motif at 349-353 is the 'KMSKS' region element; that stretch reads KMSKS. ATP is bound at residue lysine 352. Residues 573-599 form a disordered region; sequence AAPAAKVASSQQRHAEKQQHEAQSAET. The region spanning 608–718 is the tRNA-binding domain; sequence DFTKVDLRIA…TGAASGMRVK (111 aa).

Belongs to the class-I aminoacyl-tRNA synthetase family. MetG type 1 subfamily. In terms of assembly, homodimer. Requires Zn(2+) as cofactor.

It localises to the cytoplasm. The enzyme catalyses tRNA(Met) + L-methionine + ATP = L-methionyl-tRNA(Met) + AMP + diphosphate. In terms of biological role, is required not only for elongation of protein synthesis but also for the initiation of all mRNA translation through initiator tRNA(fMet) aminoacylation. This chain is Methionine--tRNA ligase, found in Aromatoleum aromaticum (strain DSM 19018 / LMG 30748 / EbN1) (Azoarcus sp. (strain EbN1)).